Here is a 285-residue protein sequence, read N- to C-terminus: Lipoyl synthase (285 aa).

Positions 36, 41, 47, 62, 66, 69, and 275 each coordinate [4Fe-4S] cluster. One can recognise a Radical SAM core domain in the interval 48–264; that stretch reads FSKKTATFLI…KEYAISIGFK (217 aa).

It belongs to the radical SAM superfamily. Lipoyl synthase family. [4Fe-4S] cluster is required as a cofactor.

The protein resides in the cytoplasm. The catalysed reaction is [[Fe-S] cluster scaffold protein carrying a second [4Fe-4S](2+) cluster] + N(6)-octanoyl-L-lysyl-[protein] + 2 oxidized [2Fe-2S]-[ferredoxin] + 2 S-adenosyl-L-methionine + 4 H(+) = [[Fe-S] cluster scaffold protein] + N(6)-[(R)-dihydrolipoyl]-L-lysyl-[protein] + 4 Fe(3+) + 2 hydrogen sulfide + 2 5'-deoxyadenosine + 2 L-methionine + 2 reduced [2Fe-2S]-[ferredoxin]. The protein operates within protein modification; protein lipoylation via endogenous pathway; protein N(6)-(lipoyl)lysine from octanoyl-[acyl-carrier-protein]: step 2/2. In terms of biological role, catalyzes the radical-mediated insertion of two sulfur atoms into the C-6 and C-8 positions of the octanoyl moiety bound to the lipoyl domains of lipoate-dependent enzymes, thereby converting the octanoylated domains into lipoylated derivatives. The sequence is that of Lipoyl synthase from Caldicellulosiruptor saccharolyticus (strain ATCC 43494 / DSM 8903 / Tp8T 6331).